A 205-amino-acid polypeptide reads, in one-letter code: CASP-like protein 0U1 (205 aa).

Topologically, residues 1–38 (MDDAPGASDEAREPLLKRVGASVEGTSLMNHRLMKNPK) are cytoplasmic. The chain crosses the membrane as a helical span at residues 39 to 57 (FRALLVESLMALTTFSFMA). Over 58–89 (KQTEGLAGPELSTLNDCGEAGCGFTKFYQFKG) the chain is Extracellular. Residues 90-110 (VVGVYAGFWAYTVILIAMYVI) traverse the membrane as a helical segment. The Cytoplasmic portion of the chain corresponds to 111 to 124 (RKAPPPGTEFASYA). The chain crosses the membrane as a helical span at residues 125-145 (LFTAAMATFVVMSITECASVV). Topologically, residues 146-159 (LSSDYYVCKNADYS) are extracellular. A helical transmembrane segment spans residues 160–180 (LVSLIFAAATIVLNCLTCAFA). Residues 181–205 (WRQWGELKFVGLPKTLSALTETYPG) lie on the Cytoplasmic side of the membrane.

The protein belongs to the Casparian strip membrane proteins (CASP) family. As to quaternary structure, homodimer and heterodimers.

Its subcellular location is the cell membrane. This Ostreococcus lucimarinus (strain CCE9901) protein is CASP-like protein 0U1.